The primary structure comprises 236 residues: tRNA (guanine-N(7)-)-methyltransferase (236 aa).

Positions 35, 60, 87, and 113 each coordinate S-adenosyl-L-methionine. Residue Asp-113 is part of the active site. Residues Lys-117 and Asp-149 each contribute to the substrate site.

Belongs to the class I-like SAM-binding methyltransferase superfamily. TrmB family.

The enzyme catalyses guanosine(46) in tRNA + S-adenosyl-L-methionine = N(7)-methylguanosine(46) in tRNA + S-adenosyl-L-homocysteine. The protein operates within tRNA modification; N(7)-methylguanine-tRNA biosynthesis. Catalyzes the formation of N(7)-methylguanine at position 46 (m7G46) in tRNA. The chain is tRNA (guanine-N(7)-)-methyltransferase from Parasynechococcus marenigrum (strain WH8102).